Here is a 2293-residue protein sequence, read N- to C-terminus: G-protein coupled receptor 179 (2293 aa).

The signal sequence occupies residues 1-27; sequence MGARAVVISSLAWGLLSCCFLCSGALG. Residues 62–245 form a cache-like region region; the sequence is FLYSGDVQRL…CHEGQLRPGW (184 aa). Asn-75 is a glycosylation site (N-linked (GlcNAc...) asparagine). An intrachain disulfide couples Cys-76 to Cys-236. Residue Asn-298 is glycosylated (N-linked (GlcNAc...) asparagine). Helical transmembrane passes span 383–403, 416–436, 445–465, 494–514, 544–564, 585–602, and 608–628; these read AVLA…LVAY, IVLL…VFIL, CVAL…TIIL, LGQL…GALE, YIMV…CYAT, LLLS…VPSL, and LLLF…LIFI. Cys-445 and Cys-537 are oxidised to a cystine. An N-linked (GlcNAc...) asparagine glycan is attached at Asn-661. The segment at 733–812 is disordered; it reads QHSRDSGSLG…GRESLADGPP (80 aa). Residues 738–759 are compositionally biased toward low complexity; that stretch reads SGSLGLGSLPGSSRRRLLSSSL. A compositionally biased stretch (basic and acidic residues) spans 773–782; sequence STYDHHREHN. Asn-823 carries an N-linked (GlcNAc...) asparagine glycan. Disordered stretches follow at residues 872 to 935, 1046 to 1235, 1275 to 1294, 1326 to 1345, 1388 to 1411, 1479 to 1560, 1578 to 1770, 1792 to 1828, 1844 to 1882, 1924 to 2051, and 2212 to 2293; these read EERK…HPPI, GTGE…NPAL, ERTE…LSRS, EAVC…QLVH, GTST…ATFW, ELAG…HGGS, ATLS…VCPW, TVGK…TSKG, WKPP…KGEL, SSSH…GSEK, and FLPE…WDCE. Polar residues predominate over residues 1080 to 1089; the sequence is LKTPLQQGSV. Basic and acidic residues-rich tracts occupy residues 1105-1123, 1173-1186, and 1275-1286; these read TYKE…KGKP, CQKE…DRNK, and ERTEGGSLEKKP. Composition is skewed to basic and acidic residues over residues 1546–1555 and 1597–1632; these read ASSKAGEKLL and RTSE…RIQK. Residues 1644–1663 are compositionally biased toward polar residues; sequence PGSTPQRDTEKAQASLQRQG. Composition is skewed to basic and acidic residues over residues 1682-1698 and 1717-1728; these read GEER…RPND and KKSERLGSEKEV. Positions 1737 to 1747 are enriched in polar residues; that stretch reads PGDSSQQPDTP. 3 stretches are compositionally biased toward basic and acidic residues: residues 1748–1761, 1796–1813, and 1872–1882; these read NTEK…EHGS, GLER…RQNL, and ASDRASEKGEL. Positions 1937–1948 are enriched in polar residues; that stretch reads RVSSQPLVSTGD. Residues 1979 to 2007 show a composition bias toward basic and acidic residues; that stretch reads TETEMSRQDEKEKSQEEKERAPETRDHEG. Residues 2283-2293 are compositionally biased toward pro residues; the sequence is SPPPDYPWDCE.

The protein belongs to the G-protein coupled receptor 3 family. In terms of assembly, homodimer. Associates with the R7 group RGS-GNB5 complexes, composed of an R7 group RGS subunit (RGS6, RGS7, RGS9 or RGS11) and GNB5, promoting their localization to the cell membrane and regulating the GTPase activator activity of R7 RGS proteins. Interacts with TRPM1. Interacts with GRM6. Interacts with EGFLAM; transsynaptic interaction is required for synaptic organization of photoreceptor cells.

The protein resides in the cell membrane. The protein localises to the postsynaptic cell membrane. Its subcellular location is the cell projection. It localises to the dendrite. In terms of biological role, orphan receptor involved in vision. Required for signal transduction through retinal depolarizing bipolar cells. Acts as an atypical G-protein coupled receptor that recruits and regulates the R7 group RGS-GNB5 complexes instead of activating G proteins: promotes the GTPase activator activity of R7 RGS proteins, increasing the GTPase activity of G protein alpha subunits, thereby driving them into their inactive GDP-bound form. Associates with components of metabotropic signaling cascade in retina ON-bipolar neurons, such as TRPM1 and GRM6: may control the ability of the GRM6 cascade to gate TRPM1. This chain is G-protein coupled receptor 179, found in Mus musculus (Mouse).